The following is a 118-amino-acid chain: MSAKTKHHLRDRKVFAALLRSKRRFFSTFLMAYFMPNRVRTWRAAVSISKTKYKLAVERNLIRRQVKAIMREQFCNLNAVDVLVIINQGFLELTFKEKQTIFLNLCQKLQELDAPKPK.

The protein belongs to the RnpA family. In terms of assembly, consists of a catalytic RNA component (M1 or rnpB) and a protein subunit.

It catalyses the reaction Endonucleolytic cleavage of RNA, removing 5'-extranucleotides from tRNA precursor.. Its function is as follows. RNaseP catalyzes the removal of the 5'-leader sequence from pre-tRNA to produce the mature 5'-terminus. It can also cleave other RNA substrates such as 4.5S RNA. The protein component plays an auxiliary but essential role in vivo by binding to the 5'-leader sequence and broadening the substrate specificity of the ribozyme. This chain is Ribonuclease P protein component, found in Mycoplasma pneumoniae (strain ATCC 29342 / M129 / Subtype 1) (Mycoplasmoides pneumoniae).